Here is a 635-residue protein sequence, read N- to C-terminus: 1-deoxy-D-xylulose-5-phosphate synthase (635 aa).

Residues His74 and 115 to 117 (AHS) contribute to the thiamine diphosphate site. Asp146 contacts Mg(2+). Thiamine diphosphate is bound by residues 147 to 148 (GA), Asn176, Tyr283, and Glu365. Asn176 is a Mg(2+) binding site.

It belongs to the transketolase family. DXPS subfamily. Homodimer. The cofactor is Mg(2+). Requires thiamine diphosphate as cofactor.

It carries out the reaction D-glyceraldehyde 3-phosphate + pyruvate + H(+) = 1-deoxy-D-xylulose 5-phosphate + CO2. The protein operates within metabolic intermediate biosynthesis; 1-deoxy-D-xylulose 5-phosphate biosynthesis; 1-deoxy-D-xylulose 5-phosphate from D-glyceraldehyde 3-phosphate and pyruvate: step 1/1. Catalyzes the acyloin condensation reaction between C atoms 2 and 3 of pyruvate and glyceraldehyde 3-phosphate to yield 1-deoxy-D-xylulose-5-phosphate (DXP). The sequence is that of 1-deoxy-D-xylulose-5-phosphate synthase from Polaromonas sp. (strain JS666 / ATCC BAA-500).